Consider the following 268-residue polypeptide: Proliferating cell nuclear antigen (268 aa).

A DNA-binding region spans residues Arg-61–Lys-80.

The protein belongs to the PCNA family.

It is found in the nucleus. Its function is as follows. This protein is an auxiliary protein of DNA polymerase delta and is involved in the control of eukaryotic DNA replication by increasing the polymerase's processibility during elongation of the leading strand. The polypeptide is Proliferating cell nuclear antigen (Catharanthus roseus (Madagascar periwinkle)).